A 498-amino-acid polypeptide reads, in one-letter code: ATP synthase subunit beta, chloroplastic (498 aa).

Phosphothreonine is present on T6. At S13 the chain carries Phosphoserine. 172–179 (GGAGVGKT) provides a ligand contact to ATP.

It belongs to the ATPase alpha/beta chains family. F-type ATPases have 2 components, CF(1) - the catalytic core - and CF(0) - the membrane proton channel. CF(1) has five subunits: alpha(3), beta(3), gamma(1), delta(1), epsilon(1). CF(0) has four main subunits: a(1), b(1), b'(1) and c(9-12).

The protein localises to the plastid. Its subcellular location is the chloroplast thylakoid membrane. It carries out the reaction ATP + H2O + 4 H(+)(in) = ADP + phosphate + 5 H(+)(out). Produces ATP from ADP in the presence of a proton gradient across the membrane. The catalytic sites are hosted primarily by the beta subunits. This Brassica napus (Rape) protein is ATP synthase subunit beta, chloroplastic.